The chain runs to 516 residues: Bifunctional pantoate ligase/cytidylate kinase (516 aa).

Positions 1–279 (MVRKIFQTNA…CGSTRLIDHT (279 aa)) are pantoate--beta-alanine ligase. Residue 29–36 (MGGLHPGH) participates in ATP binding. Catalysis depends on histidine 36, which acts as the Proton donor. Glutamine 64 contacts (R)-pantoate. Glutamine 64 contributes to the beta-alanine binding site. 153 to 156 (GEKD) is a binding site for ATP. Glutamine 159 is a (R)-pantoate binding site. 190–193 (YSSR) contacts ATP. Positions 280–516 (FLMHRKPIIA…PEEVWPTPNS (237 aa)) are cytidylate kinase.

The protein in the N-terminal section; belongs to the pantothenate synthetase family. In the C-terminal section; belongs to the cytidylate kinase family. Type 1 subfamily.

The protein resides in the cytoplasm. It carries out the reaction (R)-pantoate + beta-alanine + ATP = (R)-pantothenate + AMP + diphosphate + H(+). It catalyses the reaction CMP + ATP = CDP + ADP. The catalysed reaction is dCMP + ATP = dCDP + ADP. The protein operates within cofactor biosynthesis; (R)-pantothenate biosynthesis; (R)-pantothenate from (R)-pantoate and beta-alanine: step 1/1. In terms of biological role, catalyzes the condensation of pantoate with beta-alanine in an ATP-dependent reaction via a pantoyl-adenylate intermediate. Its function is as follows. Catalyzes the transfer of a phosphate group from ATP to either CMP or dCMP to form CDP or dCDP and ADP, respectively. The polypeptide is Bifunctional pantoate ligase/cytidylate kinase (Prochlorococcus marinus (strain NATL1A)).